The sequence spans 155 residues: uncharacterized protein (155 aa).

Disordered regions lie at residues 24-63 (RVGYKEGPTVETKKIQPQLPDEDGNHSDKEDEQPQVVVLK) and 80-155 (KAAK…DENE). S50 is modified (phosphoserine). K108 bears the N6-acetyllysine mark. A compositionally biased stretch (polar residues) spans 128–147 (KQSSVRKNSQKQIKNSSLLS). Phosphoserine is present on residues S130, S147, and S150.

This is an uncharacterized protein from Mus musculus (Mouse).